The primary structure comprises 504 residues: Probable phenylalanine--tRNA ligase beta subunit (504 aa).

One can recognise a B5 domain in the interval 270–346 (IKDKSYLLSI…ICYGFNNINM (77 aa)). Aspartate 324, aspartate 330, glutamate 333, and aspartate 334 together coordinate Mg(2+).

The protein belongs to the phenylalanyl-tRNA synthetase beta subunit family. Type 2 subfamily. Tetramer of two alpha and two beta subunits. Requires Mg(2+) as cofactor.

The protein localises to the cytoplasm. It catalyses the reaction tRNA(Phe) + L-phenylalanine + ATP = L-phenylalanyl-tRNA(Phe) + AMP + diphosphate + H(+). This is Probable phenylalanine--tRNA ligase beta subunit from Vairimorpha ceranae (strain BRL01) (Microsporidian parasite).